The primary structure comprises 184 residues: MNTNSNTMVMNDANQAQITATFTKKILAHLDDPDSNKLAQFVQLFNPNNCRIIFNATPFAQATVFLQMWQNQVVQTQHALTGVDYHAIPGSGTLICNVNCKVRFDESGRDKMGQDATVPIQPNNTGNRNRPNDMNKPRPLWGPYFGISLQLIIDDRIFRNDFNGVISGFNYNMVYKPEDSLLKI.

Residues 111–135 (KMGQDATVPIQPNNTGNRNRPNDMN) form a disordered region. The span at 120–129 (IQPNNTGNRN) shows a compositional bias: polar residues. Thr-125 is modified (phosphothreonine).

As to quaternary structure, interacts with MEX67.

The protein localises to the nucleus. In terms of biological role, affects mRNA transport from the nucleus to the cytoplasm. The chain is mRNA transport regulator MTR2 (MTR2) from Saccharomyces cerevisiae (strain ATCC 204508 / S288c) (Baker's yeast).